A 705-amino-acid chain; its full sequence is UvrABC system protein C (705 aa).

The GIY-YIG domain maps to 16 to 95 (ETPGVYRFRD…IKQFDPRFNV (80 aa)). Residues 208–243 (GRYLRRLEREMQQAAQAQEYERAARLRDDIGALRRA) enclose the UVR domain. Over residues 315-332 (AASTGTAGSTVPTTTAGS) the composition is skewed to low complexity. 2 disordered regions span residues 315-335 (AAST…SQGE) and 683-705 (RADA…ETVS).

Belongs to the UvrC family. Interacts with UvrB in an incision complex.

The protein resides in the cytoplasm. The UvrABC repair system catalyzes the recognition and processing of DNA lesions. UvrC both incises the 5' and 3' sides of the lesion. The N-terminal half is responsible for the 3' incision and the C-terminal half is responsible for the 5' incision. The protein is UvrABC system protein C of Frankia casuarinae (strain DSM 45818 / CECT 9043 / HFP020203 / CcI3).